A 383-amino-acid chain; its full sequence is Cytochrome b (383 aa).

Helical transmembrane passes span 35–55 (FGSI…ILSM), 79–100 (WLFR…YIHI), 115–135 (WGIG…GYVL), and 180–200 (FFSL…LHLF). Heme b contacts are provided by His85 and His99. Heme b is bound by residues His184 and His198. Residue His203 participates in a ubiquinone binding. Transmembrane regions (helical) follow at residues 228 to 248 (IKDL…NFQF), 290 to 310 (LGGV…IFYN), 321 to 341 (LNKI…WLGK), and 348 to 368 (FTNI…LNFY).

Belongs to the cytochrome b family. The main subunits of complex b-c1 are: cytochrome b, cytochrome c1 and the Rieske protein. It depends on heme b as a cofactor.

The protein localises to the mitochondrion inner membrane. Its function is as follows. Component of the ubiquinol-cytochrome c reductase complex (complex III or cytochrome b-c1 complex) that is part of the mitochondrial respiratory chain. The b-c1 complex mediates electron transfer from ubiquinol to cytochrome c. Contributes to the generation of a proton gradient across the mitochondrial membrane that is then used for ATP synthesis. This is Cytochrome b (MT-CYB) from Apis mellifera ligustica (Common honeybee).